The sequence spans 416 residues: Enolase (416 aa).

Gln-162 serves as a coordination point for (2R)-2-phosphoglycerate. The active-site Proton donor is the Glu-204. Mg(2+) is bound by residues Asp-241, Glu-282, and Asp-309. 4 residues coordinate (2R)-2-phosphoglycerate: Lys-334, Arg-363, Ser-364, and Lys-385. The active-site Proton acceptor is the Lys-334.

It belongs to the enolase family. Mg(2+) serves as cofactor.

It is found in the cytoplasm. The protein localises to the secreted. It localises to the cell surface. It catalyses the reaction (2R)-2-phosphoglycerate = phosphoenolpyruvate + H2O. It participates in carbohydrate degradation; glycolysis; pyruvate from D-glyceraldehyde 3-phosphate: step 4/5. In terms of biological role, catalyzes the reversible conversion of 2-phosphoglycerate (2-PG) into phosphoenolpyruvate (PEP). It is essential for the degradation of carbohydrates via glycolysis. The polypeptide is Enolase (Campylobacter concisus (strain 13826)).